A 425-amino-acid polypeptide reads, in one-letter code: MDRNKEIFEESKKYMPGGVNSPVRSFGSVGINPPVIKSGKGAMIKDENGNEYIDFVLAWGPMILGHCDEDVVEAIKKTSEESIAFGASTKLELDLAKLLCETLDNVDMIRMVNSGTEATMSAVKLARGYTKKDKIIKFAGCYHGHFDGFLIEAGSGVLTEGIPGCLGVPEESIKNTLIGIYNDEKQVEELFEKYGNDIAGIIIEPVAGNMGVVKCDPKFMRKLRELCDKYGALLIFDEVMCGFRVAYKGAQTLFDVKPDLVTYAKIMGGGLPCGAYGGRREIMENLSPLGGVYQAGTMSGNPIVMSAGLATVKKLYENPSYYNHIEKIGSKLEKGVLEIAKKKGLGLVVNRQGGMITLFFTDLKEVKCYDDVKTCDGERFKRYFLHMLNKGFNIPPSQFEAMFLSVKHTEEHIDKFLEAFETFEG.

Lys265 is subject to N6-(pyridoxal phosphate)lysine.

The protein belongs to the class-III pyridoxal-phosphate-dependent aminotransferase family. HemL subfamily. As to quaternary structure, homodimer. Pyridoxal 5'-phosphate is required as a cofactor.

The protein localises to the cytoplasm. The catalysed reaction is (S)-4-amino-5-oxopentanoate = 5-aminolevulinate. Its pathway is porphyrin-containing compound metabolism; protoporphyrin-IX biosynthesis; 5-aminolevulinate from L-glutamyl-tRNA(Glu): step 2/2. The polypeptide is Glutamate-1-semialdehyde 2,1-aminomutase (Clostridium perfringens (strain 13 / Type A)).